The chain runs to 343 residues: Holliday junction branch migration complex subunit RuvB (343 aa).

Positions 4–193 (TDNLTAAQPQ…FGIVSRLEFY (190 aa)) are large ATPase domain (RuvB-L). ATP is bound by residues Leu-32, Arg-33, Gly-74, Lys-77, Thr-78, Thr-79, 140–142 (EDY), Arg-183, Tyr-193, and Arg-230. Thr-78 provides a ligand contact to Mg(2+). The interval 194–264 (ENRDLTTIVS…IADAALSMLD (71 aa)) is small ATPAse domain (RuvB-S). The interval 267-343 (AQGLDVMDRK…YLHFGLPVEK (77 aa)) is head domain (RuvB-H). Residues Arg-322 and Arg-327 each contribute to the DNA site.

Belongs to the RuvB family. As to quaternary structure, homohexamer. Forms an RuvA(8)-RuvB(12)-Holliday junction (HJ) complex. HJ DNA is sandwiched between 2 RuvA tetramers; dsDNA enters through RuvA and exits via RuvB. An RuvB hexamer assembles on each DNA strand where it exits the tetramer. Each RuvB hexamer is contacted by two RuvA subunits (via domain III) on 2 adjacent RuvB subunits; this complex drives branch migration. In the full resolvosome a probable DNA-RuvA(4)-RuvB(12)-RuvC(2) complex forms which resolves the HJ.

It is found in the cytoplasm. It carries out the reaction ATP + H2O = ADP + phosphate + H(+). The RuvA-RuvB-RuvC complex processes Holliday junction (HJ) DNA during genetic recombination and DNA repair, while the RuvA-RuvB complex plays an important role in the rescue of blocked DNA replication forks via replication fork reversal (RFR). RuvA specifically binds to HJ cruciform DNA, conferring on it an open structure. The RuvB hexamer acts as an ATP-dependent pump, pulling dsDNA into and through the RuvAB complex. RuvB forms 2 homohexamers on either side of HJ DNA bound by 1 or 2 RuvA tetramers; 4 subunits per hexamer contact DNA at a time. Coordinated motions by a converter formed by DNA-disengaged RuvB subunits stimulates ATP hydrolysis and nucleotide exchange. Immobilization of the converter enables RuvB to convert the ATP-contained energy into a lever motion, pulling 2 nucleotides of DNA out of the RuvA tetramer per ATP hydrolyzed, thus driving DNA branch migration. The RuvB motors rotate together with the DNA substrate, which together with the progressing nucleotide cycle form the mechanistic basis for DNA recombination by continuous HJ branch migration. Branch migration allows RuvC to scan DNA until it finds its consensus sequence, where it cleaves and resolves cruciform DNA. The polypeptide is Holliday junction branch migration complex subunit RuvB (Neisseria meningitidis serogroup C (strain 053442)).